The chain runs to 695 residues: NAD(P)H-quinone oxidoreductase subunit 5, chloroplastic (695 aa).

The next 15 membrane-spanning stretches (helical) occupy residues 1–21 (WIIPFIPLPVPILIGAGLILF), 32–52 (WAFQSVLLLSIVMIFSIYLSI), 81–101 (IDPLTSIMXXLITTVGIMVLI), 117–137 (FAYMSFFSTSMLGLVTSSNLI), 139–159 (IYIFWELVGLCSYLLIGFWFT), 177–197 (GDFGLLLGILGFYWITGSFEF), 211–231 (NEVNFLFVTLCAVLLFVGAVA), 250–270 (TPISALIHAATMVAAGIFLVA), 278–298 (VIPYIMYLISIIGIITVLLGA), 319–339 (LGYMMLALGMGSYRSALFHLI), 346–366 (ALLFLGSGSIIHSMETIVGYS), 388–408 (ITFLLGTLSLCGIPPLACFWS), 417–437 (WLYSPIFAIIAWATAGLTAFY), 535–555 (LFPIFVLGLFTLFVGSIGIPF), and 594–614 (VLSVSIAYFGIFIASFLYKPI).

This sequence belongs to the complex I subunit 5 family. NDH is composed of at least 16 different subunits, 5 of which are encoded in the nucleus.

Its subcellular location is the plastid. It is found in the chloroplast thylakoid membrane. It catalyses the reaction a plastoquinone + NADH + (n+1) H(+)(in) = a plastoquinol + NAD(+) + n H(+)(out). The catalysed reaction is a plastoquinone + NADPH + (n+1) H(+)(in) = a plastoquinol + NADP(+) + n H(+)(out). Functionally, NDH shuttles electrons from NAD(P)H:plastoquinone, via FMN and iron-sulfur (Fe-S) centers, to quinones in the photosynthetic chain and possibly in a chloroplast respiratory chain. The immediate electron acceptor for the enzyme in this species is believed to be plastoquinone. Couples the redox reaction to proton translocation, and thus conserves the redox energy in a proton gradient. This is NAD(P)H-quinone oxidoreductase subunit 5, chloroplastic (ndhF) from Capsicum baccatum (Peruvian pepper).